The chain runs to 109 residues: MSAQPVDLQIFGRSLRVNCPPEQRDALSQAADDLNQRLQDLKERTRVTNTEQLVFIAALNISYELTQEKAKTRDYAASMEQRIKMLQQTIEQALLDQGRTPERPGQKFE.

Residues 21 to 97 adopt a coiled-coil conformation; the sequence is PEQRDALSQA…QTIEQALLDQ (77 aa).

The protein belongs to the ZapA family. Type 1 subfamily. As to quaternary structure, homodimer. Interacts with FtsZ.

Its subcellular location is the cytoplasm. In terms of biological role, activator of cell division through the inhibition of FtsZ GTPase activity, therefore promoting FtsZ assembly into bundles of protofilaments necessary for the formation of the division Z ring. It is recruited early at mid-cell but it is not essential for cell division. This Enterobacter sp. (strain 638) protein is Cell division protein ZapA.